A 74-amino-acid chain; its full sequence is Large ribosomal subunit protein uL29 (74 aa).

The protein belongs to the universal ribosomal protein uL29 family.

This Streptomyces griseus subsp. griseus (strain JCM 4626 / CBS 651.72 / NBRC 13350 / KCC S-0626 / ISP 5235) protein is Large ribosomal subunit protein uL29.